Reading from the N-terminus, the 264-residue chain is MPLVDPVTMSTPSTPAKAMGKSLPNTVKDPSPPPKAGSHTRSPVESPSNSYYIAASIPALQLQIFVLLWKRLVDDPVATMSRLILPVMALIQVFYAVVLLPVAGSGKQWRKPRPGEKKKAQGGEPNIALATLLSLLLTLIATPPIHALMVLFGAPFLTHAPHTFLCALNLSLLTLFPLFYTRGAEASAWRALAGFTAPIDESVGGLVGACFGAWLGAVPIPLDWDRDWQRWPVTVLTGIYVGYAIGSYGGRTLLRIRGYSAKRS.

Positions 1 to 45 are disordered; that stretch reads MPLVDPVTMSTPSTPAKAMGKSLPNTVKDPSPPPKAGSHTRSPVE. Transmembrane regions (helical) follow at residues 49 to 69, 83 to 103, 132 to 152, 160 to 180, 202 to 222, and 233 to 253; these read NSYY…VLLW, LILP…LPVA, LLSL…MVLF, APHT…PLFY, SVGG…PIPL, and VTVL…GRTL.

The protein belongs to the PIGF family.

It localises to the endoplasmic reticulum membrane. The protein operates within glycolipid biosynthesis; glycosylphosphatidylinositol-anchor biosynthesis. In terms of biological role, acts in the GPI biosynthetic pathway between GlcNAc-PI synthesis and GPI transfer to protein. The chain is Glycosylphosphatidylinositol anchor biosynthesis protein 11 (GPI11) from Pyricularia oryzae (strain 70-15 / ATCC MYA-4617 / FGSC 8958) (Rice blast fungus).